A 1384-amino-acid polypeptide reads, in one-letter code: CHD3-type chromatin-remodeling factor PICKLE (1384 aa).

Phosphoserine is present on S23. The PHD-type zinc-finger motif lies at 49–96 (ENACQACGESTNLVSCNTCTYAFHAKCLVPPLKDASVENWRCPECVSP). 2 consecutive Chromo domains span residues 98–180 (NEID…NSED) and 190–249 (TTVD…RSKD). A Helicase ATP-binding domain is found at 285–471 (RFSWSKQTHV…FMLMHFLDAG (187 aa)). Position 298-305 (298-305 (DEMGLGKT)) interacts with ATP. The Nuclear localization signal signature appears at 376–383 (KKKKSGQI). Residues 422 to 425 (DEGH) carry the DEAH box motif. A Helicase C-terminal domain is found at 599 to 760 (LLDKMMVKLK…NINQEELDDI (162 aa)). Acidic residues predominate over residues 893-912 (AGLEDVSSDGDESYEAESTD). Disordered stretches follow at residues 893 to 941 (AGLE…TPLM), 1122 to 1152 (GLQGQNGSGGSNPGAQTNQNPGSVITGNNNA), 1313 to 1344 (SDQSKSHEDDTKPDLNNVEMKDTAEETKPLRG), and 1365 to 1384 (VDVKMEEAKEEEKPKNMVVD). Polar residues predominate over residues 1138–1152 (TNQNPGSVITGNNNA). Composition is skewed to basic and acidic residues over residues 1316–1341 (SKSHEDDTKPDLNNVEMKDTAEETKP) and 1367–1384 (VKMEEAKEEEKPKNMVVD).

The protein belongs to the SNF2/RAD54 helicase family. As to quaternary structure, interacts with TAF12B. Mostly expressed in tissue undergoing significant differentiation (meristems and primordia) such as young seedlings, influorescent tissue and young siliques, but not in endosperm and seed coat (at protein level). Levels decrease as organs age. Also present in trichomes.

It is found in the nucleus. Its function is as follows. Chromatin remodeling factor that represses the expression of embryonic trait genes (such as NFYB9/LEC1) upon and after seed germination and thus enables the developmental switch to post-germinative growth. Silences some MADS-box proteins such as PHE1 and PHE2. Plays a role during carpel differentiation. Regulates late processes in cytokinin signaling. This chain is CHD3-type chromatin-remodeling factor PICKLE (PKL), found in Arabidopsis thaliana (Mouse-ear cress).